Reading from the N-terminus, the 272-residue chain is HTH-type transcriptional repressor AllR (272 aa).

Residues 1 to 20 are disordered; that stretch reads MTEVRRRGRPGQQEPSAQKG. Residues 21-83 form the HTH iclR-type domain; sequence AQALERGIAI…SQLGWWHIGL (63 aa). Residues 43–62 constitute a DNA-binding region (H-T-H motif); sequence VSDISLNLDLPLSTTFRLLK. Residues 98–267 enclose the IclR-ED domain; sequence VLSVGGPFMR…ARNISTALGL (170 aa). Residues 154–156, aspartate 207, cysteine 217, and 234–236 contribute to the glyoxylate site; these read SGA and SIS.

Negative regulator of allantoin and glyoxylate utilization operons. Binds to the gcl promoter and to the allS-allA intergenic region. The sequence is that of HTH-type transcriptional repressor AllR (allR) from Klebsiella pneumoniae.